The chain runs to 429 residues: Enolase (429 aa).

A (2R)-2-phosphoglycerate-binding site is contributed by Q162. The active-site Proton donor is the E204. Residues D241, E283, and D310 each coordinate Mg(2+). The (2R)-2-phosphoglycerate site is built by K335, R364, S365, and K386. K335 (proton acceptor) is an active-site residue.

This sequence belongs to the enolase family. It depends on Mg(2+) as a cofactor.

It is found in the cytoplasm. The protein localises to the secreted. It localises to the cell surface. The enzyme catalyses (2R)-2-phosphoglycerate = phosphoenolpyruvate + H2O. It participates in carbohydrate degradation; glycolysis; pyruvate from D-glyceraldehyde 3-phosphate: step 4/5. Functionally, catalyzes the reversible conversion of 2-phosphoglycerate (2-PG) into phosphoenolpyruvate (PEP). It is essential for the degradation of carbohydrates via glycolysis. In Mycobacterium bovis (strain BCG / Pasteur 1173P2), this protein is Enolase.